The primary structure comprises 148 residues: Protein RESISTANCE TO POWDERY MILDEW 8.1 (148 aa).

The region spanning 1 to 148 (MPIGELAIGA…VISACSKIRA (148 aa)) is the RPW8 domain. The chain crosses the membrane as a helical span at residues 7–23 (AIGAVLGVGAQAIYDRF). A coiled-coil region spans residues 120 to 140 (DDIKEIKAKISEMDTKLAEVI).

This sequence belongs to the plant RPW8 protein family.

It is found in the membrane. Its function is as follows. Disease resistance (R) protein that induces localized, salicylic acid-dependent defenses. Confers resistance to powdery mildew (e.g. Erysiphe cichoracearum UCSC1). This Arabidopsis thaliana (Mouse-ear cress) protein is Protein RESISTANCE TO POWDERY MILDEW 8.1.